The primary structure comprises 576 residues: Eukaryotic translation initiation factor 2A (576 aa).

WD repeat units lie at residues 71-119, 266-307, 308-349, and 351-396; these read LPAA…LVFS, DREG…VSII, PPAP…KKIT, and VEAA…MFYE. 2 disordered regions span residues 422–461 and 475–505; these read SASL…QNST and GSAN…NNKK. Positions 475-486 are enriched in polar residues; sequence GSANKHVNSSRQ.

The protein belongs to the WD repeat EIF2A family.

It localises to the cytoplasm. In terms of biological role, functions in the early steps of protein synthesis of a small number of specific mRNAs. Acts by directing the binding of methionyl-tRNAi to 40S ribosomal subunits. In contrast to the eIF-2 complex, it binds methionyl-tRNAi to 40S subunits in a codon-dependent manner, whereas the eIF-2 complex binds methionyl-tRNAi to 40S subunits in a GTP-dependent manner. The protein is Eukaryotic translation initiation factor 2A of Schizosaccharomyces pombe (strain 972 / ATCC 24843) (Fission yeast).